Consider the following 2698-residue polypeptide: Chromodomain-helicase-DNA-binding protein 6 (2698 aa).

Composition is skewed to basic and acidic residues over residues 1-12, 100-115, and 122-171; these read MKMKIQKKEKQL, EPGEQEGTKASKDREP, and EPKE…KRSC. Residues 1–243 form a disordered region; the sequence is MKMKIQKKEK…KRRSGRQVKR (243 aa). The interval 1–746 is required for DNA-dependent ATPase activity; the sequence is MKMKIQKKEK…MMELRKCCNH (746 aa). Residues 213–224 are compositionally biased toward low complexity; that stretch reads QSLPNPSLQSPE. Chromo domains follow at residues 291–342 and 374–438; these read NIIE…KDPR and IEID…KPVE. The 175-residue stretch at 472–646 folds into the Helicase ATP-binding domain; that stretch reads LFNWYNRKNC…FSLLNFLEPS (175 aa). 485 to 492 serves as a coordination point for ATP; that stretch reads DEMGLGKT. Residues 597-600 carry the DEAH box motif; sequence DEAH. Residues 786-955 enclose the Helicase C-terminal domain; it reads LIDKLLPKLI…LSKMEVEDLL (170 aa). Positions 1318–1370 are disordered; the sequence is SLSAEQGVTDGTSDIPERGNIDKEDSAEDKVDGLQKQTASPSDGSDGIFGEKK. A compositionally biased stretch (polar residues) spans 1320 to 1329; it reads SAEQGVTDGT. The segment covering 1332 to 1350 has biased composition (basic and acidic residues); it reads IPERGNIDKEDSAEDKVDG. The region spanning 1435 to 1489 is the Myb-like domain; sequence RWTRREQADFYRTVSSFGVVYDQEKEAFDWTQFRAISRLDKKSDENLEHYFHSFV. Polar residues predominate over residues 1707–1730; sequence EPRSFQEAPSTNMQSRKKTVTVSA. The segment at 1707-1731 is disordered; it reads EPRSFQEAPSTNMQSRKKTVTVSAS. At Ser1852 the chain carries Phosphoserine. Disordered regions lie at residues 1935 to 2046, 2111 to 2137, 2308 to 2337, 2359 to 2387, 2538 to 2587, and 2626 to 2698; these read GLGS…ASGI, LPTPVLSSSAGSRSSLSEPEATEHSFS, TTLNTTHPEGPGAASSASEPTAAASSQAEK, PGFGASFSDKPKQRRPRCKEPGKLDIGSL, ASLA…PTIT, and QGRH…DDTN. 3 stretches are compositionally biased toward basic and acidic residues: residues 1943–1955, 1975–1991, and 2004–2024; these read GEKPKAYEPDPYR, FKLKHELLKEPWKESSE, and SEPKSEEMDFENKDDYEKDGA. 2 stretches are compositionally biased toward low complexity: residues 2117 to 2127 and 2315 to 2336; these read SSSAGSRSSLS and PEGPGAASSASEPTAAASSQAE. Over residues 2538 to 2550 the composition is skewed to low complexity; that stretch reads ASLASTKSGASAT. Basic and acidic residues predominate over residues 2552–2573; sequence KTTEDELSGRDVKADSLVEDKP. 2 stretches are compositionally biased toward polar residues: residues 2578 to 2587 and 2664 to 2675; these read FSDQSEPTIT and SDQNCTESSVTV. Positions 2677–2698 are enriched in basic and acidic residues; that stretch reads PEREHVAQAREEGLKDSNDDTN.

Belongs to the SNF2/RAD54 helicase family. As to quaternary structure, interacts with NFE2L2; involved in activation of the transcription. May interact with PPARA. Widely expressed.

It is found in the nucleus. The protein resides in the nucleoplasm. It catalyses the reaction ATP + H2O = ADP + phosphate + H(+). Its function is as follows. ATP-dependent chromatin-remodeling factor. Regulates transcription by disrupting nucleosomes in a largely non-sliding manner which strongly increases the accessibility of chromatin. Activates transcription of specific genes in response to oxidative stress through interaction with NFE2L2. The chain is Chromodomain-helicase-DNA-binding protein 6 (Chd6) from Rattus norvegicus (Rat).